The sequence spans 517 residues: Urethanase (517 aa).

Catalysis depends on charge relay system residues Lys-98 and Ser-173. Ser-197 acts as the Acyl-ester intermediate in catalysis.

This sequence belongs to the amidase family. In terms of assembly, homooctamer.

The enzyme catalyses urethane + H2O + H(+) = ethanol + NH4(+) + CO2. Its activity is regulated as follows. Exhibits poor salt tolerance but excellent tolerance to low concentrations of ethanol. EDTA has almost no impact on activity. Activity is increased in the presence of Ca(2+), Mg(2+) and Co(3+) and inhibited in the presence of Al(3+), Zn(2+) and Cu(2+). Its function is as follows. Hydrolase that can catalyze the degradation of ethyl carbamate (also called urethane), a probable human carcinogen widely found in alcoholic beverages. Can also use methyl carbamate, butyl carbamate, acetamide and urea. Also catalyzes the enantioselective hydrolysis of 2-phenylpropionamide, alpha-chlorophenylacetamide, 2-methyl-3-phenylpropionamide and alpha-methoxyphenylacetamide to the corresponding acids. Is inactive on benzamide and L-glutamine. This chain is Urethanase, found in Rhizobium radiobacter (Agrobacterium tumefaciens).